Reading from the N-terminus, the 62-residue chain is uncharacterized protein (62 aa).

Its subcellular location is the mitochondrion. This is an uncharacterized protein from Marchantia polymorpha (Common liverwort).